A 327-amino-acid polypeptide reads, in one-letter code: Solute-binding protein SPO1773 (327 aa).

The first 26 residues, 1–26, serve as a signal peptide directing secretion; it reads MTISFKGLARGVACAALVLAALPAAA. 3-hydroxybenzoate-binding positions include 39–41, arginine 150, 170–172, and aspartate 211; these read HTW and RIT.

Belongs to the bacterial solute-binding protein 7 family. In terms of assembly, the complex is comprised of an extracytoplasmic solute-binding protein and a heteromeric permease formed by two transmembrane proteins.

The protein localises to the periplasm. Functionally, solute-binding protein that binds 3,4-dihydroxybenzoate and 3-hydroxybenzoate (in vitro). Probably part of a tripartite ATP-independent periplasmic (TRAP) transport system that mediates solute transport into the cytoplasm. The protein is Solute-binding protein SPO1773 of Ruegeria pomeroyi (strain ATCC 700808 / DSM 15171 / DSS-3) (Silicibacter pomeroyi).